Here is a 127-residue protein sequence, read N- to C-terminus: RxLR effector protein CRE6 (127 aa).

A signal peptide spans 1–19; that stretch reads MIRNALLVLVFVLIGTISA. The short motif at 48-67 is the RxLR-dEER element; the sequence is RLLRQGSVKEGGVHDATEER.

The protein belongs to the RxLR effector family.

Its subcellular location is the secreted. It is found in the host cell. In terms of biological role, effector that is involved in host plant infection. Contributes to virulence during the early infection stage, by inhibiting plant defense responses induced by both PAMP-triggered immunity (PTI) and effector-triggered immunity (ETI). The protein is RxLR effector protein CRE6 of Phytophthora infestans (strain T30-4) (Potato late blight agent).